Reading from the N-terminus, the 67-residue chain is ATP synthase F(0) complex subunit 8 (67 aa).

Residues 8 to 24 (TWFINIVSMILTLFIVF) form a helical membrane-spanning segment. Residue K54 is modified to N6-acetyllysine; alternate. An N6-succinyllysine; alternate modification is found at K54. Residue K57 is modified to N6-acetyllysine.

It belongs to the ATPase protein 8 family. Component of the ATP synthase complex composed at least of ATP5F1A/subunit alpha, ATP5F1B/subunit beta, ATP5MC1/subunit c (homooctomer), MT-ATP6/subunit a, MT-ATP8/subunit 8, ATP5ME/subunit e, ATP5MF/subunit f, ATP5MG/subunit g, ATP5MK/subunit k, ATP5MJ/subunit j, ATP5F1C/subunit gamma, ATP5F1D/subunit delta, ATP5F1E/subunit epsilon, ATP5PF/subunit F6, ATP5PB/subunit b, ATP5PD/subunit d, ATP5PO/subunit OSCP. ATP synthase complex consists of a soluble F(1) head domain (subunits alpha(3) and beta(3)) - the catalytic core - and a membrane F(0) domain - the membrane proton channel (subunits c, a, 8, e, f, g, k and j). These two domains are linked by a central stalk (subunits gamma, delta, and epsilon) rotating inside the F1 region and a stationary peripheral stalk (subunits F6, b, d, and OSCP). Interacts with PRICKLE3.

The protein resides in the mitochondrion membrane. Its function is as follows. Subunit 8, of the mitochondrial membrane ATP synthase complex (F(1)F(0) ATP synthase or Complex V) that produces ATP from ADP in the presence of a proton gradient across the membrane which is generated by electron transport complexes of the respiratory chain. ATP synthase complex consist of a soluble F(1) head domain - the catalytic core - and a membrane F(1) domain - the membrane proton channel. These two domains are linked by a central stalk rotating inside the F(1) region and a stationary peripheral stalk. During catalysis, ATP synthesis in the catalytic domain of F(1) is coupled via a rotary mechanism of the central stalk subunits to proton translocation. In vivo, can only synthesize ATP although its ATP hydrolase activity can be activated artificially in vitro. Part of the complex F(0) domain. The sequence is that of ATP synthase F(0) complex subunit 8 from Equus asinus (Donkey).